An 835-amino-acid polypeptide reads, in one-letter code: Outer membrane usher protein FasD (835 aa).

Residues 1–21 form the signal peptide; that stretch reads MNKYPPLLTMLIIGIGSNAVA. The cysteines at positions 810 and 834 are disulfide-linked.

This sequence belongs to the fimbrial export usher family.

It is found in the cell outer membrane. Its function is as follows. Involved in the export and assembly of the 987P fimbriae subunits across the outer membrane. This is Outer membrane usher protein FasD (fasD) from Escherichia coli.